We begin with the raw amino-acid sequence, 241 residues long: Glucosamine-6-phosphate deaminase (241 aa).

The active-site Proton acceptor; for enolization step is the aspartate 67. Asparagine 136 acts as the For ring-opening step in catalysis. Histidine 138 acts as the Proton acceptor; for ring-opening step in catalysis. Residue glutamate 143 is the For ring-opening step of the active site.

It belongs to the glucosamine/galactosamine-6-phosphate isomerase family. NagB subfamily.

The catalysed reaction is alpha-D-glucosamine 6-phosphate + H2O = beta-D-fructose 6-phosphate + NH4(+). The protein operates within amino-sugar metabolism; N-acetylneuraminate degradation; D-fructose 6-phosphate from N-acetylneuraminate: step 5/5. Its function is as follows. Catalyzes the reversible isomerization-deamination of glucosamine 6-phosphate (GlcN6P) to form fructose 6-phosphate (Fru6P) and ammonium ion. The protein is Glucosamine-6-phosphate deaminase of Clostridium tetani (strain Massachusetts / E88).